The primary structure comprises 319 residues: Free fatty acid receptor 3 (319 aa).

The Extracellular portion of the chain corresponds to 1–15 (MGTSFFLGNYWLFFS). Residues 16-36 (VYLLVFLVGLPLNVMALVVFV) traverse the membrane as a helical segment. Residues 37–43 (GKLRRRP) lie on the Cytoplasmic side of the membrane. Residues 44 to 64 (VAVDLLLLNLTISDLLLLLFL) traverse the membrane as a helical segment. Residues 65-98 (PFRMVEAACGMRWLLPFIFCPLSGFLFFTTIYLT) lie on the Extracellular side of the membrane. Cysteines 84 and 165 form a disulfide. Residues 99-119 (SLFLTAVSIERFLSVAYPLWY) traverse the membrane as a helical segment. Over 120–127 (KTRPRLAQ) the chain is Cytoplasmic. Residues 128-148 (AGLVSVVCWFLASAHCSVVYI) form a helical membrane-spanning segment. The Extracellular portion of the chain corresponds to 149-183 (TEYWGNATYSQGTNGTCYLEFREDQLAILLPVRLE). 2 N-linked (GlcNAc...) asparagine glycosylation sites follow: Asn154 and Asn162. Residues 184–206 (MAVVLFMVPLCITSYCYSRLVWI) traverse the membrane as a helical segment. Over 207–218 (LSRGASRRRRKR) the chain is Cytoplasmic. Residues 219–239 (IMGLLAATLLIFFVCFGPYNM) form a helical membrane-spanning segment. The Extracellular portion of the chain corresponds to 240 to 254 (SHVVGYVSRESPSWR). Residues 255-275 (SYVLLLSTLNSCIDPLVFYFS) traverse the membrane as a helical segment. The Cytoplasmic portion of the chain corresponds to 276 to 319 (SSKFQADFHQLLGRLLRTCVPWTQQVSLELKVKNGEEPSKECPS).

The protein belongs to the G-protein coupled receptor 1 family. In terms of tissue distribution, expressed in white adipose tissue and skeletal muscle (at protein level). Abundantly expressed in sympathetic ganglia such as the superior cervical ganglion. Also expressed by intestinal endocrine cells.

The protein resides in the cell membrane. In terms of biological role, g protein-coupled receptor that is activated by a major product of dietary fiber digestion, the short chain fatty acids (SCFAs), and that plays a role in the regulation of whole-body energy homeostasis and in intestinal immunity. In omnivorous mammals, the short chain fatty acids acetate, propionate and butyrate are produced primarily by the gut microbiome that metabolizes dietary fibers. SCFAs serve as a source of energy but also act as signaling molecules. That G protein-coupled receptor is probably coupled to the pertussis toxin-sensitive, G(i/o)-alpha family of G proteins. Its activation results in the formation of inositol 1,4,5-trisphosphate, the mobilization of intracellular calcium, the phosphorylation of the MAPK3/ERK1 and MAPK1/ERK2 kinases and the inhibition of intracellular cAMP accumulation. Activated by SCFAs and by beta-hydroxybutyrate, a ketone body produced by the liver upon starvation, it inhibits N-type calcium channels and modulates the activity of sympathetic neurons through a signaling cascade involving the beta and gamma subunits of its coupled G protein, phospholipase C and MAP kinases. Thereby, it may regulate energy expenditure through the control of the sympathetic nervous system that controls for instance heart rate. Upon activation by SCFAs accumulating in the intestine, it may also signal to the brain via neural circuits which in turn would regulate intestinal gluconeogenesis. May also control the production of hormones involved in whole-body energy homeostasis. May for instance, regulate blood pressure through renin secretion. May also regulate secretion of the PYY peptide by enteroendocrine cells and control gut motility, intestinal transit rate, and the harvesting of energy from SCFAs produced by gut microbiota. May also indirectly regulate the production of LEP/Leptin, a hormone acting on the CNS to inhibit food intake, in response to the presence of short-chain fatty acids in the intestine. Finally, may also play a role in glucose homeostasis. Besides its role in energy homeostasis, may play a role in intestinal immunity. May mediate the activation of the inflammatory and immune response by SCFAs in the gut, regulating the rapid production of chemokines and cytokines by intestinal epithelial cells. Exhibits an SCFA-independent constitutive G protein-coupled receptor activity. In Mus musculus (Mouse), this protein is Free fatty acid receptor 3 (Ffar3).